An 847-amino-acid chain; its full sequence is Leucine--tRNA ligase (847 aa).

The 'HIGH' region motif lies at 39–49; the sequence is PYPSGALHMGH. A 'KMSKS' region motif is present at residues 613–617; it reads KMSKS. Lysine 616 contacts ATP.

It belongs to the class-I aminoacyl-tRNA synthetase family.

It is found in the cytoplasm. It carries out the reaction tRNA(Leu) + L-leucine + ATP = L-leucyl-tRNA(Leu) + AMP + diphosphate. This chain is Leucine--tRNA ligase, found in Gloeobacter violaceus (strain ATCC 29082 / PCC 7421).